A 279-amino-acid polypeptide reads, in one-letter code: tRNA pseudouridine synthase A (279 aa).

The active-site Nucleophile is aspartate 54. Tyrosine 112 contributes to the substrate binding site.

The protein belongs to the tRNA pseudouridine synthase TruA family. In terms of assembly, homodimer.

It carries out the reaction uridine(38/39/40) in tRNA = pseudouridine(38/39/40) in tRNA. Functionally, formation of pseudouridine at positions 38, 39 and 40 in the anticodon stem and loop of transfer RNAs. In Cutibacterium acnes (strain DSM 16379 / KPA171202) (Propionibacterium acnes), this protein is tRNA pseudouridine synthase A.